We begin with the raw amino-acid sequence, 295 residues long: G1/S-specific cyclin-D1 (295 aa).

Residues 28 to 152 form the Cyclin N-terminal domain; that stretch reads LRAMLKAEET…LLVNKLKWNL (125 aa). Residues 262 to 295 form a disordered region; it reads AQQNMDPKAAEEEEEEEEEVDLACTPTDVRDVDI. Lysine 269 participates in a covalent cross-link: Glycyl lysine isopeptide (Lys-Gly) (interchain with G-Cter in ubiquitin). Acidic residues predominate over residues 272-282; that stretch reads EEEEEEEEEVD. At threonine 286 the chain carries Phosphothreonine.

Belongs to the cyclin family. Cyclin D subfamily. As to quaternary structure, interacts with either CDK4 or CDK6 protein kinase to form a serine/threonine kinase holoenzyme complex. The cyclin subunit imparts substrate specificity to the complex. Component of the ternary complex CCND1/CDK4/CDKN1B required for nuclear translocation and modulation of CDK4-mediated kinase activity. Interacts directly with CDKN1B. Can form similar complexes with either CDKN1A or CDKN2A. Interacts with UHRF2; the interaction ubiquitinates CCND1 and appears to occur independently of phosphorylation. Interacts with USP2. Interacts (via cyclin N-terminal domain) with INSM1 (via N-terminal region); the interaction competes with the binding of CCND1 to CDK4 during cell cycle progression and inhibits CDK4 activity. Interacts with CDK4; the interaction is prevented with the binding of CCND1 to INSM1 during cell cycle progression. In terms of processing, phosphorylation at Thr-286 by MAP kinases is required for ubiquitination and degradation by the DCX(AMBRA1) complex. It also plays an essential role for recognition by the FBXO31 component of SCF (SKP1-cullin-F-box) protein ligase complex following DNA damage. Post-translationally, ubiquitinated at Lys-269 by the DCX(AMBRA1) complex during the transition from G1 to S cell phase, leading to its degradation: ubiquitination is dependent on Thr-286 phosphorylation. The DCX(AMBRA1) complex represents the major regulator of CCND1 stability during the G1/S transition. Also ubiquitinated by the SCF(FBXO4) and Cul7-RING(FBXW8) ubiquitin-protein ligase complexes. Following DNA damage it is ubiquitinated by the SCF(FBXO31) protein ligase complex. SCF(FBXO31) ubiquitination is dependent on Thr-286 phosphorylation. Ubiquitinated also by UHRF2 apparently in a phosphorylation-independent manner. Ubiquitination leads to its degradation and G1 arrest. Deubiquitinated by USP2; leading to its stabilization.

The protein resides in the nucleus. The protein localises to the cytoplasm. It is found in the nucleus membrane. Regulatory component of the cyclin D1-CDK4 (DC) complex that phosphorylates and inhibits members of the retinoblastoma (RB) protein family including RB1 and regulates the cell-cycle during G(1)/S transition. Phosphorylation of RB1 allows dissociation of the transcription factor E2F from the RB/E2F complex and the subsequent transcription of E2F target genes which are responsible for the progression through the G(1) phase. Hypophosphorylates RB1 in early G(1) phase. Cyclin D-CDK4 complexes are major integrators of various mitogenenic and antimitogenic signals. Also a substrate for SMAD3, phosphorylating SMAD3 in a cell-cycle-dependent manner and repressing its transcriptional activity. Component of the ternary complex, cyclin D1/CDK4/CDKN1B, required for nuclear translocation and activity of the cyclin D-CDK4 complex. Exhibits transcriptional corepressor activity with INSM1 on the NEUROD1 and INS promoters in a cell cycle-independent manner. The chain is G1/S-specific cyclin-D1 from Homo sapiens (Human).